We begin with the raw amino-acid sequence, 561 residues long: MNINVAELLNGNYILLLFVVLALGLCLGKLRLGSIQLGNSIGVLVVSLLLGQQHFSINTDALNLGFMLFIFCVGVEAGPNFFSIFFRDGKNYLMLALVMVGSALVIALGLGKLFGWDIGLTAGMLAGSMTSTPVLVGAGDTLRHSGMESRQLSLALDNLSLGYALTYLIGLVSLIVGARYLPKLQHQDLQTSAQQIARERGLDTDANRKVYLPVIRAYRVGPELVAWTDGKNLRELGIYRQTGCYIERIRRNGILANPDGDAVLQMGDEIALVGYPDAHARLDPSFRNGKEVFDRDLLDMRIVTEEVVVKNHNAVGKRLAQLKLTDHGCFLNRVIRSQIEMPIDDNVVLNKGDVLQVSGDARRVKTIADRIGFISIHSQVTDLLAFCAFFVIGLMIGMITFQFSTFSFGMGNAAGLLFAGIMLGFMRANHPTFGYIPQGALSMVKEFGLMVFMAGVGLSAGSGINNGLGAIGGQMLIAGLIVSLVPVVICFLFGAYVLRMNRALLFGAMMGARTCAPAMEIISDTAHSNIPALGYAGTYAIANVLLTLAGTIIVMVWPGLG.

5 helical membrane-spanning segments follow: residues 8-28 (LLNG…LCLG), 32-52 (LGSI…LLGQ), 66-86 (FMLF…SIFF), 94-114 (MLAL…GKLF), and 158-178 (NLSL…IVGA). 2 RCK C-terminal domains span residues 200 to 288 (RGLD…SFRN) and 292 to 373 (VFDR…RIGF). 5 helical membrane passes run 383 to 403 (LLAF…TFQF), 406 to 426 (FSFG…LGFM), 451 to 471 (VFMA…LGAI), 475 to 495 (MLIA…LFGA), and 540 to 560 (AIAN…WPGL).

This sequence belongs to the AAE transporter (TC 2.A.81) family. YbjL subfamily.

The protein resides in the cell membrane. In Shigella boydii serotype 4 (strain Sb227), this protein is Putative transport protein YbjL.